Consider the following 1819-residue polypeptide: U3 small nucleolar RNA-associated protein 10 (1819 aa).

One copy of the HEAT 1 repeat lies at 583–620 (LDFQAILPFLLVALADPSERIRREAAAALAAIGGIYKK). 2 helical membrane passes run 945-965 (IQSG…AIVN) and 1001-1021 (ALLL…HSVM). HEAT repeat units follow at residues 1045-1082 (QTID…AFEH), 1269-1306 (LTLV…QNPE), 1313-1351 (IRVL…KYGK), and 1775-1812 (ALLP…VLGE).

Belongs to the HEATR1/UTP10 family. In terms of assembly, component of the ribosomal small subunit (SSU) processome.

The protein localises to the nucleus. It is found in the nucleolus. The protein resides in the membrane. Its function is as follows. Involved in nucleolar processing of pre-18S ribosomal RNA. Involved in ribosome biosynthesis. The protein is U3 small nucleolar RNA-associated protein 10 of Aspergillus clavatus (strain ATCC 1007 / CBS 513.65 / DSM 816 / NCTC 3887 / NRRL 1 / QM 1276 / 107).